The sequence spans 175 residues: Shikimate kinase (175 aa).

16–21 serves as a coordination point for ATP; the sequence is GAGKST. Ser20 lines the Mg(2+) pocket. Substrate-binding residues include Asp38, Arg62, and Gly84. Position 122 (Arg122) interacts with ATP. Arg141 is a binding site for substrate.

It belongs to the shikimate kinase family. In terms of assembly, monomer. Mg(2+) serves as cofactor.

It is found in the cytoplasm. It catalyses the reaction shikimate + ATP = 3-phosphoshikimate + ADP + H(+). It functions in the pathway metabolic intermediate biosynthesis; chorismate biosynthesis; chorismate from D-erythrose 4-phosphate and phosphoenolpyruvate: step 5/7. Its function is as follows. Catalyzes the specific phosphorylation of the 3-hydroxyl group of shikimic acid using ATP as a cosubstrate. The chain is Shikimate kinase from Legionella pneumophila (strain Paris).